The chain runs to 174 residues: Cathepsin B-like cysteine proteinase 3 (174 aa).

Cystine bridges form between Cys22–Cys55 and Cys30–Cys42. Residues His122 and Asn142 contribute to the active site.

Belongs to the peptidase C1 family.

Expression of the protease correlates with blood-feeding and suggests a role for the protease in blood digestion. This chain is Cathepsin B-like cysteine proteinase 3 (CP-3), found in Ostertagia ostertagi (Brown stomach worm).